Here is a 477-residue protein sequence, read N- to C-terminus: Mannitol 2-dehydrogenase (477 aa).

19 to 30 (IVHIGVGNFHRA) is a binding site for NAD(+).

It belongs to the mannitol dehydrogenase family. As to quaternary structure, monomer.

The enzyme catalyses D-mannitol + NAD(+) = D-fructose + NADH + H(+). This Cereibacter sphaeroides (Rhodobacter sphaeroides) protein is Mannitol 2-dehydrogenase (mtlK).